We begin with the raw amino-acid sequence, 801 residues long: H(+)/Cl(-) exchange transporter 3 (801 aa).

Over 1 to 125 (MESEQLFHRG…WEMTKSLYDA (125 aa)) the chain is Cytoplasmic. 3 consecutive short sequence motifs (di-leucine internalization motif; mediates targeting to late endosome and lysosome membranes) follow at residues 28 to 29 (LL), 46 to 47 (LL), and 71 to 75 (LLDLL). The chain crosses the membrane as a helical span at residues 126-163 (WSGWLVVTLTGLASGALAGLIDIAADWMTDLKEGICLS). An N-linked (GlcNAc...) asparagine glycan is attached at Asn177. The helical transmembrane segment at 209-232 (MNYIMYIFWALSFAFLAVSLVKVF) threads the bilayer. A Selectivity filter part_1 motif is present at residues 238 to 242 (GSGIP). Ser239 lines the chloride pocket. The helical intramembrane region spans 241–248 (IPEIKTIL). The next 2 membrane-spanning stretches (helical) occupy residues 258–276 (GKWT…VASG) and 282–301 (EGPL…YLFP). A Selectivity filter part_2 motif is present at residues 280–284 (GKEGP). Intramembrane regions (helical) lie at residues 313 to 325 (VLSA…VSVA) and 329 to 337 (PIGGVLFSL). 3 helical membrane passes run 349 to 367 (LWRS…RSIN), 391 to 416 (FPFI…AWCR), and 423 to 443 (FGKY…VIAF). N-linked (GlcNAc...) asparagine glycosylation is found at Asn451 and Asn479. Residues 500–520 (IWQLCLALIFKIIMTVFTFGI) traverse the membrane as a helical segment. Residues 525-529 (GLFIP) carry the Selectivity filter part_3 motif. Phe527 is a binding site for chloride. Intramembrane regions (helical) lie at residues 555-569 (GLYA…LGGV) and 573-584 (TVSLVVIVFELT). The segment at residues 585-588 (GGLE) is an intramembrane region (note=Loop between two helices). The helical transmembrane segment at 589-607 (YIVPLMAAVMTSKWVGDAF) threads the bilayer. The Cytoplasmic segment spans residues 608-801 (GREGIYEAHI…NQDPASIMFN (194 aa)). Tyr613 lines the chloride pocket. 2 consecutive CBS domains span residues 641 to 705 (MRPR…ARKK) and 738 to 795 (LDMS…NQDP). ATP is bound by residues 672–674 (YNG) and 779–782 (TKKD).

It belongs to the chloride channel (TC 2.A.49) family. ClC-3/CLCN3 subfamily. Monomer and homodimer. Forms heterodimers with CLCN4. N-glycosylated.

The protein resides in the early endosome membrane. Its subcellular location is the late endosome membrane. The protein localises to the lysosome membrane. It localises to the cell membrane. Strongly outwardly rectifying, electrogenic H(+)/Cl(-)exchanger which mediates the exchange of chloride ions against protons. The CLC channel family contains both chloride channels and proton-coupled anion transporters that exchange chloride or another anion for protons. The presence of conserved gating glutamate residues is typical for family members that function as antiporters. This chain is H(+)/Cl(-) exchange transporter 3 (CLCN3), found in Pongo abelii (Sumatran orangutan).